The sequence spans 570 residues: PTS system lactose-specific EIICB component (570 aa).

A PTS EIIC type-3 domain is found at 9-410 (IEKGKPFFEK…VVDIIIYYPF (402 aa)). A run of 9 helical transmembrane segments spans residues 31–51 (GFIS…IAYV), 65–85 (AILM…VAGT), 104–124 (INFI…ASDP), 133–153 (AFMG…TVIV), 178–198 (FKDL…DLVI), 223–243 (GWIG…VGIH), 283–303 (MFIV…MFMW), 340–360 (VFFI…KLFV), and 382–402 (IIMG…LIVV). Positions 467–570 (QTNVLVLCAG…LDFVQQQFEN (104 aa)) constitute a PTS EIIB type-3 domain. Catalysis depends on C474, which acts as the Phosphocysteine intermediate; for EIIB activity. C474 is subject to Phosphocysteine; by EIIA.

Its subcellular location is the cell membrane. It catalyses the reaction lactose(out) + N(pros)-phospho-L-histidyl-[protein] = lactose 6-phosphate(in) + L-histidyl-[protein]. In terms of biological role, the phosphoenolpyruvate-dependent sugar phosphotransferase system (sugar PTS), a major carbohydrate active transport system, catalyzes the phosphorylation of incoming sugar substrates concomitantly with their translocation across the cell membrane. The enzyme II LacEF PTS system is involved in lactose transport. In Staphylococcus aureus (strain MSSA476), this protein is PTS system lactose-specific EIICB component.